An 831-amino-acid chain; its full sequence is DNA ligase (831 aa).

Residues 34 to 38 (DADYD), 83 to 84 (SL), and glutamate 114 each bind NAD(+). Lysine 116 functions as the N6-AMP-lysine intermediate in the catalytic mechanism. Positions 137, 174, 291, and 315 each coordinate NAD(+). Zn(2+) is bound by residues cysteine 409, cysteine 412, cysteine 427, and cysteine 433. One can recognise a BRCT domain in the interval 749–831 (AHTAPLNGQS…LDFLEQYSAQ (83 aa)).

Belongs to the NAD-dependent DNA ligase family. LigA subfamily. Mg(2+) serves as cofactor. Requires Mn(2+) as cofactor.

It carries out the reaction NAD(+) + (deoxyribonucleotide)n-3'-hydroxyl + 5'-phospho-(deoxyribonucleotide)m = (deoxyribonucleotide)n+m + AMP + beta-nicotinamide D-nucleotide.. In terms of biological role, DNA ligase that catalyzes the formation of phosphodiester linkages between 5'-phosphoryl and 3'-hydroxyl groups in double-stranded DNA using NAD as a coenzyme and as the energy source for the reaction. It is essential for DNA replication and repair of damaged DNA. This chain is DNA ligase, found in Xylella fastidiosa (strain M12).